Here is a 462-residue protein sequence, read N- to C-terminus: 3-isopropylmalate dehydratase large subunit (462 aa).

Cysteine 337, cysteine 397, and cysteine 400 together coordinate [4Fe-4S] cluster.

This sequence belongs to the aconitase/IPM isomerase family. LeuC type 1 subfamily. Heterodimer of LeuC and LeuD. [4Fe-4S] cluster is required as a cofactor.

The catalysed reaction is (2R,3S)-3-isopropylmalate = (2S)-2-isopropylmalate. It participates in amino-acid biosynthesis; L-leucine biosynthesis; L-leucine from 3-methyl-2-oxobutanoate: step 2/4. In terms of biological role, catalyzes the isomerization between 2-isopropylmalate and 3-isopropylmalate, via the formation of 2-isopropylmaleate. The protein is 3-isopropylmalate dehydratase large subunit of Listeria welshimeri serovar 6b (strain ATCC 35897 / DSM 20650 / CCUG 15529 / CIP 8149 / NCTC 11857 / SLCC 5334 / V8).